We begin with the raw amino-acid sequence, 211 residues long: Small ribosomal subunit protein uS3 (211 aa).

Positions 38–106 (LRNFLKKRLF…EIYLNIQEVR (69 aa)) constitute a KH type-2 domain.

Belongs to the universal ribosomal protein uS3 family. In terms of assembly, part of the 30S ribosomal subunit. Forms a tight complex with proteins S10 and S14.

Binds the lower part of the 30S subunit head. Binds mRNA in the 70S ribosome, positioning it for translation. The polypeptide is Small ribosomal subunit protein uS3 (Geobacter metallireducens (strain ATCC 53774 / DSM 7210 / GS-15)).